The sequence spans 1153 residues: Duffy receptor beta form (1153 aa).

A signal peptide spans 1-21; sequence MEGKKKRPLFFLLVLLLSHKA. Residues 22 to 1085 lie on the Extracellular side of the membrane; that stretch reads NNVLFERMKG…YECFTKGSST (1064 aa). N-linked (GlcNAc...) asparagine glycans are attached at residues Asn-134, Asn-179, and Asn-202. Cystine bridges form between Cys-214–Cys-243 and Cys-227–Cys-234. N-linked (GlcNAc...) asparagine glycosylation is found at Asn-252 and Asn-348. Intrachain disulfides connect Cys-297–Cys-374, Cys-412–Cys-429, Cys-424–Cys-504, and Cys-433–Cys-502. Residues Asn-430 and Asn-467 are each glycosylated (N-linked (GlcNAc...) asparagine). Disordered regions lie at residues 520–545, 565–591, 612–631, and 655–981; these read LKSA…GAEK, DEAA…DNIE, RGAT…SYSG, and ENSE…LYSH. Polar residues-rich tracts occupy residues 531–542 and 574–586; these read SHSTIQPMSSSG and NGNQ…NIKG. N-linked (GlcNAc...) asparagine glycosylation is found at Asn-576 and Asn-626. Over residues 661-675 the composition is skewed to basic and acidic residues; that stretch reads LETKHKIFEPSKDNS. Residues 677-733 are compositionally biased toward polar residues; the sequence is NSENSGSMEFKATSSNPITEAVESSSAEGQVQEDSAHRSVNTGRDNSTISAATSDDG. N-linked (GlcNAc...) asparagine glycosylation occurs at Asn-722. Residues 791–800 are compositionally biased toward basic and acidic residues; it reads IDGKNVDIAE. Residues 819 to 834 show a composition bias toward polar residues; it reads TDNGNVPRSGNKQNEG. 2 N-linked (GlcNAc...) asparagine glycosylation sites follow: Asn-847 and Asn-856. A compositionally biased stretch (basic and acidic residues) spans 867-878; the sequence is GNEKDFQKHDFM. Over residues 884–942 the composition is skewed to low complexity; it reads NDQTSSDQTSSDQTSSNQTSSDQTSSNQTSSDQTSSDQISSDQTSSDQTSSNQTSSDQT. Asn-900, Asn-910, and Asn-935 each carry an N-linked (GlcNAc...) asparagine glycan. A compositionally biased stretch (basic and acidic residues) spans 945–969; that stretch reads TEEHHRDNVRNPEIKSSEDMSKGDF. Residues 971–981 are compositionally biased toward polar residues; that stretch reads RNSNSNELYSH. The chain crosses the membrane as a helical span at residues 1086-1106; sequence GIGIVYFATGGAFLIILLLFV. Topologically, residues 1107-1153 are cytoplasmic; it reads SKNVASNDYEEEATFDEFVEYSDDIHRTPLMPNHIEHMQQFTPLDYS.

It is found in the membrane. Functionally, binds to Neu5Gc-sialylated receptors on macaque erythrocytes. The sequence is that of Duffy receptor beta form from Plasmodium knowlesi.